Reading from the N-terminus, the 85-residue chain is Small ribosomal subunit protein uS17 (85 aa).

It belongs to the universal ribosomal protein uS17 family. In terms of assembly, part of the 30S ribosomal subunit.

Functionally, one of the primary rRNA binding proteins, it binds specifically to the 5'-end of 16S ribosomal RNA. The polypeptide is Small ribosomal subunit protein uS17 (Mycoplasma pneumoniae (strain ATCC 29342 / M129 / Subtype 1) (Mycoplasmoides pneumoniae)).